Here is a 232-residue protein sequence, read N- to C-terminus: tRNA (guanine-N(1)-)-methyltransferase (232 aa).

Residues Gly111 and 131 to 136 each bind S-adenosyl-L-methionine; that span reads IGDYIL.

This sequence belongs to the RNA methyltransferase TrmD family. In terms of assembly, homodimer.

It is found in the cytoplasm. The catalysed reaction is guanosine(37) in tRNA + S-adenosyl-L-methionine = N(1)-methylguanosine(37) in tRNA + S-adenosyl-L-homocysteine + H(+). In terms of biological role, specifically methylates guanosine-37 in various tRNAs. The polypeptide is tRNA (guanine-N(1)-)-methyltransferase (Bartonella tribocorum (strain CIP 105476 / IBS 506)).